A 549-amino-acid polypeptide reads, in one-letter code: Hydroxylamine reductase (549 aa).

[4Fe-4S] cluster-binding residues include Cys5, Cys8, Cys17, and Cys23. Hybrid [4Fe-2O-2S] cluster is bound by residues His243, Glu267, Cys311, Cys403, Cys431, Cys456, Glu491, and Lys493. Cys403 carries the post-translational modification Cysteine persulfide.

Belongs to the HCP family. [4Fe-4S] cluster serves as cofactor. It depends on hybrid [4Fe-2O-2S] cluster as a cofactor.

The protein localises to the cytoplasm. It carries out the reaction A + NH4(+) + H2O = hydroxylamine + AH2 + H(+). Catalyzes the reduction of hydroxylamine to form NH(3) and H(2)O. This is Hydroxylamine reductase from Desulfitobacterium hafniense (strain Y51).